We begin with the raw amino-acid sequence, 204 residues long: B9 domain-containing protein 1 (204 aa).

One can recognise a C2 B9-type domain in the interval 9–127 (FLLMVNGQVE…TIPMFVPEST (119 aa)). A disordered region spans residues 182 to 204 (GYDTGPSDTQGVLGPSPPQSFPQ).

It belongs to the B9D family. In terms of assembly, part of the tectonic-like complex (also named B9 complex).

The protein localises to the cytoplasm. It is found in the cytoskeleton. The protein resides in the cilium basal body. It localises to the cilium axoneme. Its function is as follows. Component of the tectonic-like complex, a complex localized at the transition zone of primary cilia and acting as a barrier that prevents diffusion of transmembrane proteins between the cilia and plasma membranes. Required for ciliogenesis and sonic hedgehog/SHH signaling. This chain is B9 domain-containing protein 1 (B9D1), found in Homo sapiens (Human).